Consider the following 884-residue polypeptide: Alanine--tRNA ligase (884 aa).

The Zn(2+) site is built by histidine 562, histidine 566, cysteine 676, and histidine 680.

Belongs to the class-II aminoacyl-tRNA synthetase family. Zn(2+) is required as a cofactor.

It localises to the cytoplasm. The catalysed reaction is tRNA(Ala) + L-alanine + ATP = L-alanyl-tRNA(Ala) + AMP + diphosphate. Functionally, catalyzes the attachment of alanine to tRNA(Ala) in a two-step reaction: alanine is first activated by ATP to form Ala-AMP and then transferred to the acceptor end of tRNA(Ala). Also edits incorrectly charged Ser-tRNA(Ala) and Gly-tRNA(Ala) via its editing domain. This is Alanine--tRNA ligase from Jannaschia sp. (strain CCS1).